The sequence spans 105 residues: Thioredoxin (105 aa).

The Thioredoxin domain occupies 1–105 (MVNNVTDISF…SLLDWINKSI (105 aa)). C30 and C33 are joined by a disulfide.

The protein belongs to the thioredoxin family.

In terms of biological role, component of the thioredoxin-thioredoxin reductase system. Participates in various redox reactions through the reversible oxidation of its active center dithiol to a disulfide and catalyzes dithiol-disulfide exchange reactions. The protein is Thioredoxin (trxA) of Rickettsia typhi (strain ATCC VR-144 / Wilmington).